The primary structure comprises 250 residues: Putative apoptosis inhibitor ORF99 (250 aa).

One copy of the BIR repeat lies at 13-78 (RVNSFGGWSK…KFSGDCLYLK (66 aa)).

Functionally, may act as an apoptosis inhibitor. The sequence is that of Putative apoptosis inhibitor ORF99 from Ostreid herpesvirus 1 (isolate France) (OsHV-1).